We begin with the raw amino-acid sequence, 790 residues long: Phenylalanine--tRNA ligase beta subunit (790 aa).

The tRNA-binding domain occupies 39–154 (PDSLNTVVTG…ENTPLGESAC (116 aa)). One can recognise a B5 domain in the interval 404–483 (SDPLSLNIRP…FVQKTQKILP (80 aa)). 4 residues coordinate Mg(2+): aspartate 457, aspartate 463, glutamate 466, and glutamate 467. Positions 694-790 (PIYPSSSRDI…NLANIGKGNS (97 aa)) constitute an FDX-ACB domain.

The protein belongs to the phenylalanyl-tRNA synthetase beta subunit family. Type 1 subfamily. Tetramer of two alpha and two beta subunits. Mg(2+) is required as a cofactor.

Its subcellular location is the cytoplasm. It carries out the reaction tRNA(Phe) + L-phenylalanine + ATP = L-phenylalanyl-tRNA(Phe) + AMP + diphosphate + H(+). In Chlamydia muridarum (strain MoPn / Nigg), this protein is Phenylalanine--tRNA ligase beta subunit (pheT).